The primary structure comprises 361 residues: MTQLNIAPTPADTAAANNNANAAAGAKQVARWRVADIVALYELPFNDLMFKAQQTHREHFDANTVQLSTLLSIKTGGCEEDCAYCPQSVHHDTGLQADKLMPVDEVLAAAKVAKENGATRFCMGAAWRNPKDRHLEPIKDMIRGVKAMGLETCVTLGMLETHQAQGLREAGLDYYNHNLDTSPEFYGQIISTRTYQDRLDTLERVRDAGINVCCGGIVGLGESRRERAGLIAQLANMEPYPESVPINNLVQVEGTPLTGTEAIDPFEFVRTIAIARITMPRAMVRLSAGREQMDEALQALCFLAGANSIFYGDQLLTTSNPQAEADRKLLERLGIRAEAAQQMPLDQSGCEHSCDKHAAPN.

Residues 63–290 (NTVQLSTLLS…RAMVRLSAGR (228 aa)) enclose the Radical SAM core domain. 3 residues coordinate [4Fe-4S] cluster: cysteine 78, cysteine 82, and cysteine 85. The [2Fe-2S] cluster site is built by cysteine 122, cysteine 153, cysteine 213, and arginine 285.

It belongs to the radical SAM superfamily. Biotin synthase family. Homodimer. [4Fe-4S] cluster is required as a cofactor. [2Fe-2S] cluster serves as cofactor.

The enzyme catalyses (4R,5S)-dethiobiotin + (sulfur carrier)-SH + 2 reduced [2Fe-2S]-[ferredoxin] + 2 S-adenosyl-L-methionine = (sulfur carrier)-H + biotin + 2 5'-deoxyadenosine + 2 L-methionine + 2 oxidized [2Fe-2S]-[ferredoxin]. Its pathway is cofactor biosynthesis; biotin biosynthesis; biotin from 7,8-diaminononanoate: step 2/2. Catalyzes the conversion of dethiobiotin (DTB) to biotin by the insertion of a sulfur atom into dethiobiotin via a radical-based mechanism. The sequence is that of Biotin synthase from Paraburkholderia phytofirmans (strain DSM 17436 / LMG 22146 / PsJN) (Burkholderia phytofirmans).